The chain runs to 497 residues: Probable cytosol aminopeptidase (497 aa).

Positions 268 and 273 each coordinate Mn(2+). Lys-280 is a catalytic residue. Mn(2+) is bound by residues Asp-291, Asp-350, and Glu-352. Arg-354 is a catalytic residue.

Belongs to the peptidase M17 family. It depends on Mn(2+) as a cofactor.

It localises to the cytoplasm. The enzyme catalyses Release of an N-terminal amino acid, Xaa-|-Yaa-, in which Xaa is preferably Leu, but may be other amino acids including Pro although not Arg or Lys, and Yaa may be Pro. Amino acid amides and methyl esters are also readily hydrolyzed, but rates on arylamides are exceedingly low.. It catalyses the reaction Release of an N-terminal amino acid, preferentially leucine, but not glutamic or aspartic acids.. Presumably involved in the processing and regular turnover of intracellular proteins. Catalyzes the removal of unsubstituted N-terminal amino acids from various peptides. This Alkalilimnicola ehrlichii (strain ATCC BAA-1101 / DSM 17681 / MLHE-1) protein is Probable cytosol aminopeptidase.